A 233-amino-acid polypeptide reads, in one-letter code: Large ribosomal subunit protein uL1 (233 aa).

This sequence belongs to the universal ribosomal protein uL1 family. In terms of assembly, part of the 50S ribosomal subunit.

Functionally, binds directly to 23S rRNA. The L1 stalk is quite mobile in the ribosome, and is involved in E site tRNA release. Protein L1 is also a translational repressor protein, it controls the translation of the L11 operon by binding to its mRNA. This is Large ribosomal subunit protein uL1 from Psychrobacter cryohalolentis (strain ATCC BAA-1226 / DSM 17306 / VKM B-2378 / K5).